Consider the following 250-residue polypeptide: 3-deoxy-manno-octulosonate cytidylyltransferase (250 aa).

It belongs to the KdsB family.

The protein localises to the cytoplasm. The catalysed reaction is 3-deoxy-alpha-D-manno-oct-2-ulosonate + CTP = CMP-3-deoxy-beta-D-manno-octulosonate + diphosphate. It participates in nucleotide-sugar biosynthesis; CMP-3-deoxy-D-manno-octulosonate biosynthesis; CMP-3-deoxy-D-manno-octulosonate from 3-deoxy-D-manno-octulosonate and CTP: step 1/1. The protein operates within bacterial outer membrane biogenesis; lipopolysaccharide biosynthesis. Its function is as follows. Activates KDO (a required 8-carbon sugar) for incorporation into bacterial lipopolysaccharide in Gram-negative bacteria. In Azorhizobium caulinodans (strain ATCC 43989 / DSM 5975 / JCM 20966 / LMG 6465 / NBRC 14845 / NCIMB 13405 / ORS 571), this protein is 3-deoxy-manno-octulosonate cytidylyltransferase.